The chain runs to 379 residues: MAKKDYYEILGLDKGASDQDIKKAFRKLALKYHPDRNPNDKKAEEKFKEINEAYQVLTDPQKKAQYDQFGTTDFNGGGFQGGFGGFDFSDLGGFGDIFDSFFGGGFSSGRRKNGPERGSDLEYTLSLTFEEAVFGVEKEISVTRNERCETCNGTGAKKGSHPHTCDKCNGTGQVRHQRSTPLGNFVTMTTCDKCGGRGTIIKNPCEECRGKGIVRKHRKIKVKVPAGVDTGNIIPIRGQGEHGKNGGPSGDLYINLRVSPHSKFKRKGFDIYLDAHISFGKAALGTSLKVPSIDGDVKYEIPPGTQPGTVFRLKGKGVPKVDGRGRGDQYVNVIVDIPKNLNEKQKEALMMFMEASGEIQPRDVEKKSFIDKIFKNDSK.

In terms of domain architecture, J spans 5 to 70 (DYYEILGLDK…QKKAQYDQFG (66 aa)). The segment at 135-217 (GVEKEISVTR…CRGKGIVRKH (83 aa)) adopts a CR-type zinc-finger fold. Residues Cys-148, Cys-151, Cys-165, Cys-168, Cys-191, Cys-194, Cys-205, and Cys-208 each coordinate Zn(2+). CXXCXGXG motif repeat units follow at residues 148 to 155 (CETCNGTG), 165 to 172 (CDKCNGTG), 191 to 198 (CDKCGGRG), and 205 to 212 (CEECRGKG).

It belongs to the DnaJ family. Homodimer. It depends on Zn(2+) as a cofactor.

It localises to the cytoplasm. In terms of biological role, participates actively in the response to hyperosmotic and heat shock by preventing the aggregation of stress-denatured proteins and by disaggregating proteins, also in an autonomous, DnaK-independent fashion. Unfolded proteins bind initially to DnaJ; upon interaction with the DnaJ-bound protein, DnaK hydrolyzes its bound ATP, resulting in the formation of a stable complex. GrpE releases ADP from DnaK; ATP binding to DnaK triggers the release of the substrate protein, thus completing the reaction cycle. Several rounds of ATP-dependent interactions between DnaJ, DnaK and GrpE are required for fully efficient folding. Also involved, together with DnaK and GrpE, in the DNA replication of plasmids through activation of initiation proteins. This Clostridium kluyveri (strain ATCC 8527 / DSM 555 / NBRC 12016 / NCIMB 10680 / K1) protein is Chaperone protein DnaJ.